The chain runs to 299 residues: ATP phosphoribosyltransferase (299 aa).

This sequence belongs to the ATP phosphoribosyltransferase family. Long subfamily. Equilibrium between an active dimeric form, an inactive hexameric form and higher aggregates. Interconversion between the various forms is largely reversible and is influenced by the natural substrates and inhibitors of the enzyme. It depends on Mg(2+) as a cofactor.

It is found in the cytoplasm. It carries out the reaction 1-(5-phospho-beta-D-ribosyl)-ATP + diphosphate = 5-phospho-alpha-D-ribose 1-diphosphate + ATP. It participates in amino-acid biosynthesis; L-histidine biosynthesis; L-histidine from 5-phospho-alpha-D-ribose 1-diphosphate: step 1/9. Its activity is regulated as follows. Feedback inhibited by histidine. In terms of biological role, catalyzes the condensation of ATP and 5-phosphoribose 1-diphosphate to form N'-(5'-phosphoribosyl)-ATP (PR-ATP). Has a crucial role in the pathway because the rate of histidine biosynthesis seems to be controlled primarily by regulation of HisG enzymatic activity. This chain is ATP phosphoribosyltransferase, found in Sodalis glossinidius (strain morsitans).